A 267-amino-acid chain; its full sequence is 4-hydroxy-tetrahydrodipicolinate reductase (267 aa).

NAD(+)-binding positions include 8–13 (GAAGRM) and Glu34. Arg35 lines the NADP(+) pocket. Residues 98–100 (GST) and 122–125 (APNM) contribute to the NAD(+) site. His155 (proton donor/acceptor) is an active-site residue. Position 156 (His156) interacts with (S)-2,3,4,5-tetrahydrodipicolinate. Lys159 serves as the catalytic Proton donor. 165–166 (GT) contributes to the (S)-2,3,4,5-tetrahydrodipicolinate binding site.

This sequence belongs to the DapB family.

Its subcellular location is the cytoplasm. It carries out the reaction (S)-2,3,4,5-tetrahydrodipicolinate + NAD(+) + H2O = (2S,4S)-4-hydroxy-2,3,4,5-tetrahydrodipicolinate + NADH + H(+). It catalyses the reaction (S)-2,3,4,5-tetrahydrodipicolinate + NADP(+) + H2O = (2S,4S)-4-hydroxy-2,3,4,5-tetrahydrodipicolinate + NADPH + H(+). It functions in the pathway amino-acid biosynthesis; L-lysine biosynthesis via DAP pathway; (S)-tetrahydrodipicolinate from L-aspartate: step 4/4. Its function is as follows. Catalyzes the conversion of 4-hydroxy-tetrahydrodipicolinate (HTPA) to tetrahydrodipicolinate. The sequence is that of 4-hydroxy-tetrahydrodipicolinate reductase from Citrifermentans bemidjiense (strain ATCC BAA-1014 / DSM 16622 / JCM 12645 / Bem) (Geobacter bemidjiensis).